The chain runs to 213 residues: LexA repressor (213 aa).

The segment at residues 29-49 (RAEIAQALGFRSPNAAEDHLK) is a DNA-binding region (H-T-H motif). Residues serine 131 and lysine 168 each act as for autocatalytic cleavage activity in the active site.

This sequence belongs to the peptidase S24 family. In terms of assembly, homodimer.

It carries out the reaction Hydrolysis of Ala-|-Gly bond in repressor LexA.. Represses a number of genes involved in the response to DNA damage (SOS response), including recA and lexA. In the presence of single-stranded DNA, RecA interacts with LexA causing an autocatalytic cleavage which disrupts the DNA-binding part of LexA, leading to derepression of the SOS regulon and eventually DNA repair. In Bordetella avium (strain 197N), this protein is LexA repressor.